The sequence spans 561 residues: Dihydroxy-acid dehydratase (561 aa).

Cys-51 is a [2Fe-2S] cluster binding site. Asp-83 serves as a coordination point for Mg(2+). Cys-124 provides a ligand contact to [2Fe-2S] cluster. Residues Asp-125 and Lys-126 each coordinate Mg(2+). Residue Lys-126 is modified to N6-carboxylysine. A [2Fe-2S] cluster-binding site is contributed by Cys-196. Residue Glu-447 coordinates Mg(2+). Ser-473 (proton acceptor) is an active-site residue.

Belongs to the IlvD/Edd family. As to quaternary structure, homodimer. [2Fe-2S] cluster serves as cofactor. Mg(2+) is required as a cofactor.

It carries out the reaction (2R)-2,3-dihydroxy-3-methylbutanoate = 3-methyl-2-oxobutanoate + H2O. The enzyme catalyses (2R,3R)-2,3-dihydroxy-3-methylpentanoate = (S)-3-methyl-2-oxopentanoate + H2O. It functions in the pathway amino-acid biosynthesis; L-isoleucine biosynthesis; L-isoleucine from 2-oxobutanoate: step 3/4. Its pathway is amino-acid biosynthesis; L-valine biosynthesis; L-valine from pyruvate: step 3/4. Its function is as follows. Functions in the biosynthesis of branched-chain amino acids. Catalyzes the dehydration of (2R,3R)-2,3-dihydroxy-3-methylpentanoate (2,3-dihydroxy-3-methylvalerate) into 2-oxo-3-methylpentanoate (2-oxo-3-methylvalerate) and of (2R)-2,3-dihydroxy-3-methylbutanoate (2,3-dihydroxyisovalerate) into 2-oxo-3-methylbutanoate (2-oxoisovalerate), the penultimate precursor to L-isoleucine and L-valine, respectively. In Oceanobacillus iheyensis (strain DSM 14371 / CIP 107618 / JCM 11309 / KCTC 3954 / HTE831), this protein is Dihydroxy-acid dehydratase.